Reading from the N-terminus, the 458-residue chain is Ribulose bisphosphate carboxylase (458 aa).

N111 contacts substrate. The active-site Proton acceptor is the K166. Substrate is bound at residue K168. 3 residues coordinate Mg(2+): K191, D193, and E194. Position 191 is an N6-carboxylysine (K191). Catalysis depends on H287, which acts as the Proton acceptor. Residues R288, H321, and S368 each coordinate substrate.

It belongs to the RuBisCO large chain family. Type II subfamily. As to quaternary structure, homodimer. The cofactor is Mg(2+).

It catalyses the reaction 2 (2R)-3-phosphoglycerate + 2 H(+) = D-ribulose 1,5-bisphosphate + CO2 + H2O. The enzyme catalyses D-ribulose 1,5-bisphosphate + O2 = 2-phosphoglycolate + (2R)-3-phosphoglycerate + 2 H(+). Functionally, ruBisCO catalyzes two reactions: the carboxylation of D-ribulose 1,5-bisphosphate, the primary event in carbon dioxide fixation, as well as the oxidative fragmentation of the pentose substrate. Both reactions occur simultaneously and in competition at the same active site. This chain is Ribulose bisphosphate carboxylase (cbbM), found in Rhodobacter capsulatus (strain ATCC BAA-309 / NBRC 16581 / SB1003).